The primary structure comprises 683 residues: U4/U6 small nuclear ribonucleoprotein Prp3 (683 aa).

The 87-residue stretch at 1–87 (MALSKRELDE…HSKSSSDRSR (87 aa)) folds into the PWI domain. The segment covering 73-107 (GRSSRHSKSSSDRSRKRELKEVFGDDSEISKESSG) has biased composition (basic and acidic residues). Residues 73–135 (GRSSRHSKSS…IPGPPSESPG (63 aa)) form a disordered region. A Glycyl lysine isopeptide (Lys-Gly) (interchain with G-Cter in SUMO2) cross-link involves residue Lys-139. The tract at residues 153–183 (IEERKKQLSFISPPTPQPKTPSSSQPERLPI) is disordered. Ser-164 carries the post-translational modification Phosphoserine. A Phosphothreonine modification is found at Thr-167. Residues Lys-244 and Lys-252 each participate in a glycyl lysine isopeptide (Lys-Gly) (interchain with G-Cter in SUMO2) cross-link. The segment at 416–550 (NLVEHPAQLN…VHISVYRVRN (135 aa)) is mediates interaction with SART3. Ser-619 bears the Phosphoserine mark.

In terms of assembly, component of the precatalytic spliceosome (spliceosome B complex). Component of the U4/U6-U5 tri-snRNP complex, a building block of the precatalytic spliceosome (spliceosome B complex). The U4/U6-U5 tri-snRNP complex is composed of the U4, U6 and U5 snRNAs and at least PRPF3, PRPF4, PRPF6, PRPF8, PRPF31, SNRNP200, TXNL4A, SNRNP40, SNRPB, SNRPD1, SNRPD2, SNRPD3, SNRPE, SNRPF, SNRPG, DDX23, CD2BP2, PPIH, SNU13, EFTUD2, SART1 and USP39, plus LSM2, LSM3, LSM4, LSM5, LSM6, LSM7 and LSM8. Interacts directly with PRPF4. Part of a heteromeric complex containing PPIH, PRPF3 and PRPF4 that is stable in the absence of RNA. Interacts with SART3; the interaction is direct and recruits the deubiquitinase USP4 to PRPF3. Interacts with PRPF19. Interacts ('Lys-63'-linked polyubiquitinated) with PRPF8 (via the MPN (JAB/Mov34) domain); may stabilize the U4/U6-U5 tri-snRNP complex. Interacts with ERCC6. Ubiquitinated. Undergoes 'Lys-63'-linked polyubiquitination by PRPF19 and deubiquitination by USP4. 'Lys-63'-linked ubiquitination increases the affinity for PRPF8 and may regulate the assembly of the U4/U6-U5 tri-snRNP complex. In terms of tissue distribution, highly expressed in retina, liver, kidney and blood. Detected at lower levels in heart and brain.

The protein localises to the nucleus. The protein resides in the nucleus speckle. In terms of biological role, plays a role in pre-mRNA splicing as component of the U4/U6-U5 tri-snRNP complex that is involved in spliceosome assembly, and as component of the precatalytic spliceosome (spliceosome B complex). This chain is U4/U6 small nuclear ribonucleoprotein Prp3 (PRPF3), found in Homo sapiens (Human).